A 504-amino-acid polypeptide reads, in one-letter code: Maturase K (504 aa).

Belongs to the intron maturase 2 family. MatK subfamily.

The protein resides in the plastid. It localises to the chloroplast. Functionally, usually encoded in the trnK tRNA gene intron. Probably assists in splicing its own and other chloroplast group II introns. The protein is Maturase K of Mentzelia laevicaulis (Blazing star).